The following is a 371-amino-acid chain: DNA replication and repair protein RecF (371 aa).

30–37 is an ATP binding site; that stretch reads GENAQGKT.

This sequence belongs to the RecF family.

The protein localises to the cytoplasm. In terms of biological role, the RecF protein is involved in DNA metabolism; it is required for DNA replication and normal SOS inducibility. RecF binds preferentially to single-stranded, linear DNA. It also seems to bind ATP. In Staphylococcus haemolyticus (strain JCSC1435), this protein is DNA replication and repair protein RecF.